Reading from the N-terminus, the 97-residue chain is Zinc metalloproteinase-disintegrin-like bothrojarin-4 (97 aa).

One can recognise a Disintegrin domain in the interval 4–90 (PPVCGNYFVE…DCPTDRFRRN (87 aa)). The Ca(2+) site is built by V6, N9, F11, E13, E16, and D19. Disulfide bonds link C7–C36, C18–C31, C20–C26, C30–C53, C44–C50, C49–C75, and C62–C82. The N-linked (GlcNAc...) asparagine glycan is linked to N32. Residues 68–70 (KCD) carry the D/ECD-tripeptide; atypical (KCD) motif.

Belongs to the venom metalloproteinase (M12B) family. P-III subfamily. P-IIIa sub-subfamily. Monomer. Zn(2+) serves as cofactor. Expressed by the venom gland.

It localises to the secreted. Functionally, the hemorrhagic metalloproteinase-disintegrin-like bothrojarin-1 is a potent inhibitor of collagen-induced platelet aggregation by blockage of alpha-2/beta-1 (ITGA2/ITGB1) integrin. It does not present any fibrinogen-clotting activity. The protein is Zinc metalloproteinase-disintegrin-like bothrojarin-4 of Bothrops jararaca (Jararaca).